The chain runs to 659 residues: Glycogen operon protein GlgX homolog (659 aa).

D333 (nucleophile) is an active-site residue. The active-site Proton donor is E369. Residues 456-468 show a composition bias toward basic and acidic residues; that stretch reads NETNGEENRDGRN. Residues 456–486 are disordered; that stretch reads NETNGEENRDGRNENYSYNHGVEGSTESLSE.

It belongs to the glycosyl hydrolase 13 family.

The protein is Glycogen operon protein GlgX homolog (glgX) of Haemophilus influenzae (strain ATCC 51907 / DSM 11121 / KW20 / Rd).